We begin with the raw amino-acid sequence, 304 residues long: Putative S-adenosyl-L-methionine-dependent methyltransferase MAV_4236 (304 aa).

Residues Asp-129 and Asp-158 to Leu-159 contribute to the S-adenosyl-L-methionine site.

Belongs to the UPF0677 family.

Its function is as follows. Exhibits S-adenosyl-L-methionine-dependent methyltransferase activity. This is Putative S-adenosyl-L-methionine-dependent methyltransferase MAV_4236 from Mycobacterium avium (strain 104).